The primary structure comprises 360 residues: Mannonate dehydratase (360 aa).

Belongs to the mannonate dehydratase family. Fe(2+) is required as a cofactor. Mn(2+) serves as cofactor.

The enzyme catalyses D-mannonate = 2-dehydro-3-deoxy-D-gluconate + H2O. The protein operates within carbohydrate metabolism; pentose and glucuronate interconversion. Its function is as follows. Catalyzes the dehydration of D-mannonate. This Thermotoga maritima (strain ATCC 43589 / DSM 3109 / JCM 10099 / NBRC 100826 / MSB8) protein is Mannonate dehydratase (uxuA).